A 529-amino-acid chain; its full sequence is DNA-binding protein (529 aa).

Over residues 1–17 (MASREEEQRETTPERGR) the composition is skewed to basic and acidic residues. 2 disordered regions span residues 1–107 (MASR…IVDS) and 125–166 (PVLI…AESE). Residues 129 to 139 (KHGKGGKRTVR) are compositionally biased toward basic residues. Residues 155–165 (EEEEEPSEAES) show a composition bias toward acidic residues. Y195 is modified (phosphotyrosine; by host). Residues C284 and H286 each contribute to the Zn(2+) site. Residues 297-331 (IEMDVTSENGQRALKEQSSKAKIVKNRWGRNVVQI) form a flexible loop region. Zn(2+)-binding residues include C339, C355, C396, C398, C450, and C467. The C-terminal arm, DBP binding stretch occupies residues 513-529 (VSLPVAHSDARQNPFDF).

The protein belongs to the adenoviridae E2A DNA-binding protein family. As to quaternary structure, homomultimerizes on viral ssDNA bound to pTP. Forms a initiation complex with viral polymerase, pTP and hosts NFIA and POU2F1/OCT1. Interacts with host SRCAP.

It localises to the host nucleus. In terms of biological role, plays a role in the elongation phase of viral strand displacement replication by unwinding the template in an ATP-independent fashion, employing its capacity to form multimers. Also enhances the rate of initiation. Released from template upon second strand synthesis. Assembles in complex with viral pTP, viral pol, host NFIA and host POU2F1/OCT1 on viral origin of replication. Covers the whole ssDNA genome during synthesis. The complementary strand synthesis induces its relese from DNA template. May inhibit cellular transcription mediated by the interaction between host SRCAP and CBP. The protein is DNA-binding protein of Human adenovirus C serotype 5 (HAdV-5).